The following is a 428-amino-acid chain: MVEVYARLRAAVARLAVCSAAEKDGALRAVRDALHAQREDILRANAQDLARAREAGLAAPLVARLALSEHLLEDMLRSLTVLSLQRDPIGEIIEGYTLANGLEIRKVRVPLGVVAVIYESRPNVTVDAFALAYKSGNAVLLRAGSAASYSNAPLLRAIHVGLKKAHGVVDAVAVPPVLEEKYGDVDHILRARGFIDAVFPRGGAALIRRVVEGAHVPVIETGCGVCHLYVDESANIDVALQIAENAKLQKPAACNSVETLLVHRAVARPFLHRVQEIFATCEETTRKPGGVDFFCDAESFSLLTERGARKNVFHAQAETWDREYLDYQVSVRVVPNLEEALRHIARHSTKHSEVIVTRDRARARRFHQEVDAACVYVNASSRFTDGGQFGMGAEIGVSTQKLHARGPMGLCALTTSKYLIDGEGQVRP.

It belongs to the gamma-glutamyl phosphate reductase family.

Its subcellular location is the cytoplasm. The enzyme catalyses L-glutamate 5-semialdehyde + phosphate + NADP(+) = L-glutamyl 5-phosphate + NADPH + H(+). The protein operates within amino-acid biosynthesis; L-proline biosynthesis; L-glutamate 5-semialdehyde from L-glutamate: step 2/2. In terms of biological role, catalyzes the NADPH-dependent reduction of L-glutamate 5-phosphate into L-glutamate 5-semialdehyde and phosphate. The product spontaneously undergoes cyclization to form 1-pyrroline-5-carboxylate. This chain is Gamma-glutamyl phosphate reductase, found in Treponema pallidum (strain Nichols).